A 178-amino-acid polypeptide reads, in one-letter code: ATP synthase subunit delta (178 aa).

It belongs to the ATPase delta chain family. As to quaternary structure, F-type ATPases have 2 components, F(1) - the catalytic core - and F(0) - the membrane proton channel. F(1) has five subunits: alpha(3), beta(3), gamma(1), delta(1), epsilon(1). F(0) has three main subunits: a(1), b(2) and c(10-14). The alpha and beta chains form an alternating ring which encloses part of the gamma chain. F(1) is attached to F(0) by a central stalk formed by the gamma and epsilon chains, while a peripheral stalk is formed by the delta and b chains.

It localises to the cell inner membrane. F(1)F(0) ATP synthase produces ATP from ADP in the presence of a proton or sodium gradient. F-type ATPases consist of two structural domains, F(1) containing the extramembraneous catalytic core and F(0) containing the membrane proton channel, linked together by a central stalk and a peripheral stalk. During catalysis, ATP synthesis in the catalytic domain of F(1) is coupled via a rotary mechanism of the central stalk subunits to proton translocation. Its function is as follows. This protein is part of the stalk that links CF(0) to CF(1). It either transmits conformational changes from CF(0) to CF(1) or is implicated in proton conduction. This chain is ATP synthase subunit delta, found in Cellvibrio japonicus (strain Ueda107) (Pseudomonas fluorescens subsp. cellulosa).